Consider the following 108-residue polypeptide: Urease subunit beta (108 aa).

This sequence belongs to the urease beta subunit family. Heterotrimer of UreA (gamma), UreB (beta) and UreC (alpha) subunits. Three heterotrimers associate to form the active enzyme.

The protein resides in the cytoplasm. The catalysed reaction is urea + 2 H2O + H(+) = hydrogencarbonate + 2 NH4(+). The protein operates within nitrogen metabolism; urea degradation; CO(2) and NH(3) from urea (urease route): step 1/1. The protein is Urease subunit beta of Nocardia farcinica (strain IFM 10152).